Consider the following 270-residue polypeptide: MRLALGIRYNGQAYEGWQSQRSGRTVQDKLEAALAKFAAQPIGTLCAGRTDAGVHALMQVVHFDTTVEREPFSWMRGTNRFLPDDIAVQWAQPVPDEFHCRASALARRYLYVLSQSPVRPSLDSGRVGWSMHPLDGDAMRAAAALLVGKHDFSSFRASACQARSPVKDLRRIEITRVGSGDRCRWHFEFEADAFLHHMIRNLMGCLVRIGRGDERPEWITEVLEARSRKVAAPTFSANGLYFLGPLYDAKWGLPAEATLQAGGAPYDGPP.

Asp-51 acts as the Nucleophile in catalysis. Tyr-109 is a substrate binding site.

This sequence belongs to the tRNA pseudouridine synthase TruA family. Homodimer.

It catalyses the reaction uridine(38/39/40) in tRNA = pseudouridine(38/39/40) in tRNA. Its function is as follows. Formation of pseudouridine at positions 38, 39 and 40 in the anticodon stem and loop of transfer RNAs. This chain is tRNA pseudouridine synthase A, found in Variovorax paradoxus (strain S110).